A 244-amino-acid chain; its full sequence is Phosphoadenosine 5'-phosphosulfate reductase (244 aa).

Residue C239 is the Nucleophile; cysteine thiosulfonate intermediate of the active site.

Belongs to the PAPS reductase family. CysH subfamily.

It localises to the cytoplasm. The enzyme catalyses [thioredoxin]-disulfide + sulfite + adenosine 3',5'-bisphosphate + 2 H(+) = [thioredoxin]-dithiol + 3'-phosphoadenylyl sulfate. It functions in the pathway sulfur metabolism; hydrogen sulfide biosynthesis; sulfite from sulfate: step 3/3. Its function is as follows. Catalyzes the formation of sulfite from phosphoadenosine 5'-phosphosulfate (PAPS) using thioredoxin as an electron donor. This chain is Phosphoadenosine 5'-phosphosulfate reductase, found in Salmonella paratyphi A (strain AKU_12601).